Here is a 59-residue protein sequence, read N- to C-terminus: Large ribosomal subunit protein uL30 (59 aa).

Belongs to the universal ribosomal protein uL30 family. As to quaternary structure, part of the 50S ribosomal subunit.

The protein is Large ribosomal subunit protein uL30 of Nocardia farcinica (strain IFM 10152).